A 46-amino-acid chain; its full sequence is MKKFRWVALVVVVLACLLLWAQVFNMMCDQDVQFFSGICAINQFIP.

Residues 6-26 (WVALVVVVLACLLLWAQVFNM) traverse the membrane as a helical segment.

The protein belongs to the MgrB family. In terms of assembly, may form homooligomers. Probably interacts with the periplasmic domain of PhoQ.

It localises to the cell inner membrane. In terms of biological role, phoP-regulated transcription is redox-sensitive, being activated when the periplasm becomes more reducing. MgrB acts between DsbA/DsbB and PhoP/PhoQ in this pathway. Represses PhoP/PhoQ signaling, possibly by binding to the periplasmic domain of PhoQ, altering its activity and that of downstream effector PhoP. The protein is PhoP/PhoQ regulator MgrB of Escherichia coli O6:K15:H31 (strain 536 / UPEC).